Reading from the N-terminus, the 141-residue chain is NADPH-dependent 7-cyano-7-deazaguanine reductase (141 aa).

The active-site Thioimide intermediate is the Cys34. Asp41 acts as the Proton donor in catalysis. Residues 56–58 (VEL) and 75–76 (HE) each bind substrate.

The protein belongs to the GTP cyclohydrolase I family. QueF type 1 subfamily.

The protein localises to the cytoplasm. It carries out the reaction 7-aminomethyl-7-carbaguanine + 2 NADP(+) = 7-cyano-7-deazaguanine + 2 NADPH + 3 H(+). Its pathway is tRNA modification; tRNA-queuosine biosynthesis. Functionally, catalyzes the NADPH-dependent reduction of 7-cyano-7-deazaguanine (preQ0) to 7-aminomethyl-7-deazaguanine (preQ1). The protein is NADPH-dependent 7-cyano-7-deazaguanine reductase of Acidithiobacillus ferrooxidans (strain ATCC 23270 / DSM 14882 / CIP 104768 / NCIMB 8455) (Ferrobacillus ferrooxidans (strain ATCC 23270)).